Here is a 170-residue protein sequence, read N- to C-terminus: MNLTLFATEGFGLNFNLFETNILNWAVVVFGLYKFLPGFLGKMLQKRREGILLELKDAEDRLLNATQALEKAKKDLSSAEEKASQIKADSLKRSESIRMESEKKAIEEMARIKQSAISDESSEASRAISQLRKEAVELAIKKALDSLPNRLDKTTQENLVTQSINNIEVN.

The helical transmembrane segment at 22–41 (ILNWAVVVFGLYKFLPGFLG) threads the bilayer. Residues 72–98 (AKKDLSSAEEKASQIKADSLKRSESIR) form a disordered region.

Belongs to the ATPase B chain family. In terms of assembly, F-type ATPases have 2 components, F(1) - the catalytic core - and F(0) - the membrane proton channel. F(1) has five subunits: alpha(3), beta(3), gamma(1), delta(1), epsilon(1). F(0) has four main subunits: a(1), b(1), b'(1) and c(10-14). The alpha and beta chains form an alternating ring which encloses part of the gamma chain. F(1) is attached to F(0) by a central stalk formed by the gamma and epsilon chains, while a peripheral stalk is formed by the delta, b and b' chains.

It localises to the cellular thylakoid membrane. F(1)F(0) ATP synthase produces ATP from ADP in the presence of a proton or sodium gradient. F-type ATPases consist of two structural domains, F(1) containing the extramembraneous catalytic core and F(0) containing the membrane proton channel, linked together by a central stalk and a peripheral stalk. During catalysis, ATP synthesis in the catalytic domain of F(1) is coupled via a rotary mechanism of the central stalk subunits to proton translocation. Functionally, component of the F(0) channel, it forms part of the peripheral stalk, linking F(1) to F(0). The sequence is that of ATP synthase subunit b from Prochlorococcus marinus (strain MIT 9301).